The chain runs to 210 residues: ATP-dependent Clp protease proteolytic subunit (210 aa).

The Nucleophile role is filled by Ser107. Residue His132 is part of the active site.

This sequence belongs to the peptidase S14 family. As to quaternary structure, fourteen ClpP subunits assemble into 2 heptameric rings which stack back to back to give a disk-like structure with a central cavity, resembling the structure of eukaryotic proteasomes.

It is found in the cytoplasm. The enzyme catalyses Hydrolysis of proteins to small peptides in the presence of ATP and magnesium. alpha-casein is the usual test substrate. In the absence of ATP, only oligopeptides shorter than five residues are hydrolyzed (such as succinyl-Leu-Tyr-|-NHMec, and Leu-Tyr-Leu-|-Tyr-Trp, in which cleavage of the -Tyr-|-Leu- and -Tyr-|-Trp bonds also occurs).. Functionally, cleaves peptides in various proteins in a process that requires ATP hydrolysis. Has a chymotrypsin-like activity. Plays a major role in the degradation of misfolded proteins. This Ruegeria sp. (strain TM1040) (Silicibacter sp.) protein is ATP-dependent Clp protease proteolytic subunit.